Here is a 419-residue protein sequence, read N- to C-terminus: Pyrophosphate--fructose 6-phosphate 1-phosphotransferase (419 aa).

Gly-12 provides a ligand contact to diphosphate. Residue Asp-107 coordinates Mg(2+). Substrate-binding positions include 132 to 134 (TID), 178 to 180 (MGR), Glu-238, and 300 to 303 (YELR). The active-site Proton acceptor is the Asp-134.

Belongs to the phosphofructokinase type A (PFKA) family. PPi-dependent PFK group II subfamily. Clade 'Short' sub-subfamily. In terms of assembly, homodimer. Mg(2+) serves as cofactor. Requires Co(2+) as cofactor. It depends on Mn(2+) as a cofactor. The cofactor is Ni(2+).

Its subcellular location is the cytoplasm. It catalyses the reaction beta-D-fructose 6-phosphate + diphosphate = beta-D-fructose 1,6-bisphosphate + phosphate + H(+). The protein operates within carbohydrate degradation; glycolysis; D-glyceraldehyde 3-phosphate and glycerone phosphate from D-glucose: step 3/4. Non-allosteric. In terms of biological role, catalyzes the phosphorylation of D-fructose 6-phosphate, the first committing step of glycolysis. Uses inorganic phosphate (PPi) as phosphoryl donor instead of ATP like common ATP-dependent phosphofructokinases (ATP-PFKs), which renders the reaction reversible, and can thus function both in glycolysis and gluconeogenesis. Consistently, PPi-PFK can replace the enzymes of both the forward (ATP-PFK) and reverse (fructose-bisphosphatase (FBPase)) reactions. The sequence is that of Pyrophosphate--fructose 6-phosphate 1-phosphotransferase from Thermotoga maritima (strain ATCC 43589 / DSM 3109 / JCM 10099 / NBRC 100826 / MSB8).